The primary structure comprises 167 residues: Glutathione peroxidase-like peroxiredoxin 1 (167 aa).

Residue Cys-36 is the Cysteine sulfenic acid (-SOH) intermediate of the active site. Residues Cys-36 and Cys-82 are joined by a disulfide bond.

It belongs to the glutathione peroxidase family. In terms of assembly, monomer.

It localises to the peroxisome matrix. The protein resides in the mitochondrion outer membrane. It catalyses the reaction 2 glutathione + H2O2 = glutathione disulfide + 2 H2O. It carries out the reaction a hydroperoxide + [thioredoxin]-dithiol = an alcohol + [thioredoxin]-disulfide + H2O. Functionally, glutathione peroxidase-like protein that protects cells from phospholipid hydroperoxides and nonphospholipid peroxides during oxidative stress. Has peroxidase activity using thioredoxin or glutathione as a reducing power. Involved in peroxisome formation. In Saccharomyces cerevisiae (strain ATCC 204508 / S288c) (Baker's yeast), this protein is Glutathione peroxidase-like peroxiredoxin 1.